Here is a 236-residue protein sequence, read N- to C-terminus: Small ribosomal subunit protein uS3 (236 aa).

The region spanning 39–107 is the KH type-2 domain; that stretch reads IREFLTEELK…DTSLNIVEVR (69 aa). The segment at 214–236 is disordered; sequence ASERRAVEGDNQGSSSNRRRENA.

Belongs to the universal ribosomal protein uS3 family. As to quaternary structure, part of the 30S ribosomal subunit. Forms a tight complex with proteins S10 and S14.

In terms of biological role, binds the lower part of the 30S subunit head. Binds mRNA in the 70S ribosome, positioning it for translation. This chain is Small ribosomal subunit protein uS3, found in Brucella anthropi (strain ATCC 49188 / DSM 6882 / CCUG 24695 / JCM 21032 / LMG 3331 / NBRC 15819 / NCTC 12168 / Alc 37) (Ochrobactrum anthropi).